We begin with the raw amino-acid sequence, 1670 residues long: Hemolymph clottable protein (1670 aa).

The signal sequence occupies residues 1–14; sequence MKALILLLLGACQA. Residues 15–674 are vittelogenin; sequence LQPGLEYQYR…FANFVTTTIY (660 aa). The region spanning 15 to 764 is the Vitellogenin domain; the sequence is LQPGLEYQYR…LKIDGQQRGL (750 aa). N-linked (GlcNAc...) asparagine glycosylation occurs at Asn-106. Over residues 198-231 the composition is skewed to low complexity; it reads SSYTTKTKSKTSSKTSSKTSSKTSSKTSKTGKTS. Positions 198–236 are disordered; sequence SSYTTKTKSKTSSKTSSKTSSKTSSKTSKTGKTSPGQLA. Asn-319, Asn-459, and Asn-1301 each carry an N-linked (GlcNAc...) asparagine glycan. The VWFD domain occupies 1390 to 1550; sequence VSCTIDETKV…SWASPGEGCA (161 aa). 2 disulfides stabilise this stretch: Cys-1392–Cys-1513 and Cys-1414–Cys-1549.

As to quaternary structure, homodimer; disulfide-linked. Also exists as oligomers. Post-translationally, glycosylated. Contains mannose and N-acetylglucosamine. Substrate of transglutaminase. As to expression, widely expressed with highest levels in gill and heart. Not expressed in hemocytes.

The protein resides in the secreted. Its function is as follows. Forms stable clots in the presence of calcium. This chain is Hemolymph clottable protein, found in Penaeus monodon (Giant tiger prawn).